Consider the following 941-residue polypeptide: Isoleucine--tRNA ligase (941 aa).

The 'HIGH' region signature appears at 69–79 (PYANGDIHIGH). An L-isoleucyl-5'-AMP-binding site is contributed by Glu589. Residues 630-634 (KMSKS) carry the 'KMSKS' region motif. Lys633 is an ATP binding site. Zn(2+) contacts are provided by Cys915, Cys918, Cys932, and Cys935.

This sequence belongs to the class-I aminoacyl-tRNA synthetase family. IleS type 1 subfamily. Monomer. Zn(2+) is required as a cofactor.

The protein resides in the cytoplasm. It catalyses the reaction tRNA(Ile) + L-isoleucine + ATP = L-isoleucyl-tRNA(Ile) + AMP + diphosphate. In terms of biological role, catalyzes the attachment of isoleucine to tRNA(Ile). As IleRS can inadvertently accommodate and process structurally similar amino acids such as valine, to avoid such errors it has two additional distinct tRNA(Ile)-dependent editing activities. One activity is designated as 'pretransfer' editing and involves the hydrolysis of activated Val-AMP. The other activity is designated 'posttransfer' editing and involves deacylation of mischarged Val-tRNA(Ile). The sequence is that of Isoleucine--tRNA ligase from Zymomonas mobilis subsp. mobilis (strain ATCC 31821 / ZM4 / CP4).